Reading from the N-terminus, the 384-residue chain is Deoxyguanosinetriphosphate triphosphohydrolase-like protein (384 aa).

Positions 63-199 (RLTHSLEVAT…ASLADDISYI (137 aa)) constitute an HD domain.

Belongs to the dGTPase family. Type 2 subfamily.

In Rickettsia typhi (strain ATCC VR-144 / Wilmington), this protein is Deoxyguanosinetriphosphate triphosphohydrolase-like protein.